Reading from the N-terminus, the 313-residue chain is Hsp90 co-chaperone Cdc37-like 1 (313 aa).

Belongs to the CDC37 family. In terms of assembly, forms complexes with Hsp70 and Hsp90.

It localises to the cytoplasm. Co-chaperone that binds to numerous proteins and promotes their interaction with Hsp70 and Hsp90. This is Hsp90 co-chaperone Cdc37-like 1 (cdc37l1) from Danio rerio (Zebrafish).